A 141-amino-acid polypeptide reads, in one-letter code: MAIERTLSIIKPDAVAKNVIGQIYARFEAAGLKVVAAKMTHLSQGEAEAFYAVHKERPFFKDLVSFMISGPVMIQALEGEGAVLKNRDLMGATDPKKADAGTIRADFADSIDANAVHGSDAVETAREEIAFFFAGMNVYSR.

Lysine 11, phenylalanine 59, arginine 87, threonine 93, arginine 104, and asparagine 114 together coordinate ATP. Histidine 117 serves as the catalytic Pros-phosphohistidine intermediate.

It belongs to the NDK family. As to quaternary structure, homotetramer. Requires Mg(2+) as cofactor.

The protein resides in the cytoplasm. It carries out the reaction a 2'-deoxyribonucleoside 5'-diphosphate + ATP = a 2'-deoxyribonucleoside 5'-triphosphate + ADP. The enzyme catalyses a ribonucleoside 5'-diphosphate + ATP = a ribonucleoside 5'-triphosphate + ADP. Major role in the synthesis of nucleoside triphosphates other than ATP. The ATP gamma phosphate is transferred to the NDP beta phosphate via a ping-pong mechanism, using a phosphorylated active-site intermediate. The sequence is that of Nucleoside diphosphate kinase from Polaromonas naphthalenivorans (strain CJ2).